The chain runs to 407 residues: Triose phosphate/phosphate translocator, chloroplastic (407 aa).

The transit peptide at 1 to 81 (MESRVLSSGA…VKRDVLKPCS (81 aa)) directs the protein to the chloroplast. Residues 82-101 (ATASDSAGDAAPVGFLAKYP) lie on the Chloroplast intermembrane side of the membrane. A helical membrane pass occupies residues 102–122 (FLVTGFFFFMWYFLNVIFNIL). The Lumenal portion of the chain corresponds to 123 to 134 (NKKIYNYFPYPY). The helical transmembrane segment at 135–155 (FVSVIHLAVGVVYCLGSWTVG) threads the bilayer. The Chloroplast intermembrane portion of the chain corresponds to 156–212 (LPKRAPVDSNILKLLIPVGFCHALGHVTSNVSFAAVAVSFTHTIKALEPFFNAAASQ). Residues 213–233 (FVLGQSIPISLWLSLAPVVIG) form a helical membrane-spanning segment. Residues 234–277 (VSMASLTELSFNWLGFISAMISNISFTYRSIYSKKAMTDMDSTN) lie on the Lumenal side of the membrane. A helical membrane pass occupies residues 278 to 297 (LYAYISIIALLFCIPPAVLF). The Chloroplast intermembrane portion of the chain corresponds to 298–375 (EGPQLLKHGF…IVFGNKISTQ (78 aa)). A helical membrane pass occupies residues 376–396 (TAIGTSIAIAGVAIYSLIKAR). The Lumenal segment spans residues 397-407 (IEEEKRRMKSA).

The protein belongs to the TPT transporter family. TPT (TC 2.A.7.9) subfamily. In terms of assembly, homodimer.

Its subcellular location is the plastid. It localises to the chloroplast membrane. Mediates the export of fixed carbons from the chloroplasts into the cytosol in the form of triose phosphates. In addition, it can also bind and transport phosphoenolpyruvate, thereby increasing the photosynthetic efficiency of C4-plants. The sequence is that of Triose phosphate/phosphate translocator, chloroplastic (TPT) from Flaveria trinervia (Clustered yellowtops).